Here is a 448-residue protein sequence, read N- to C-terminus: Methylenetetrahydrofolate--tRNA-(uracil-5-)-methyltransferase TrmFO (448 aa).

13 to 18 (GAGLAG) contributes to the FAD binding site.

The protein belongs to the MnmG family. TrmFO subfamily. The cofactor is FAD.

The protein resides in the cytoplasm. It catalyses the reaction uridine(54) in tRNA + (6R)-5,10-methylene-5,6,7,8-tetrahydrofolate + NADH + H(+) = 5-methyluridine(54) in tRNA + (6S)-5,6,7,8-tetrahydrofolate + NAD(+). The enzyme catalyses uridine(54) in tRNA + (6R)-5,10-methylene-5,6,7,8-tetrahydrofolate + NADPH + H(+) = 5-methyluridine(54) in tRNA + (6S)-5,6,7,8-tetrahydrofolate + NADP(+). Catalyzes the folate-dependent formation of 5-methyl-uridine at position 54 (M-5-U54) in all tRNAs. The polypeptide is Methylenetetrahydrofolate--tRNA-(uracil-5-)-methyltransferase TrmFO (Streptococcus pyogenes serotype M5 (strain Manfredo)).